Reading from the N-terminus, the 271-residue chain is NH(3)-dependent NAD(+) synthetase (271 aa).

Position 43–50 (43–50) interacts with ATP; it reads GISGGQDS. Residue Asp49 coordinates Mg(2+). Residue Arg137 participates in deamido-NAD(+) binding. Thr157 contacts ATP. Glu162 contributes to the Mg(2+) binding site. Lys170 and Asp177 together coordinate deamido-NAD(+). Lys186 and Thr208 together coordinate ATP. 257–258 provides a ligand contact to deamido-NAD(+); that stretch reads HK.

The protein belongs to the NAD synthetase family. Homodimer.

It carries out the reaction deamido-NAD(+) + NH4(+) + ATP = AMP + diphosphate + NAD(+) + H(+). Its pathway is cofactor biosynthesis; NAD(+) biosynthesis; NAD(+) from deamido-NAD(+) (ammonia route): step 1/1. In terms of biological role, catalyzes the ATP-dependent amidation of deamido-NAD to form NAD. Uses ammonia as a nitrogen source. This is NH(3)-dependent NAD(+) synthetase from Exiguobacterium sibiricum (strain DSM 17290 / CCUG 55495 / CIP 109462 / JCM 13490 / 255-15).